The sequence spans 469 residues: MAAASPLRDCQAWKDARLPLSTTSNEACKLFDATLTQYVKWTNDKSLGGIEGCLSKLKAADPTFVMGHAMATGLVLIGTGSSVKLDKELDLAVKTMVEISRTQPLTRREQLHVSAVETFANGNFPKACELWEQILQDHPTDMLALKFSHDAYFYLGYQEQMRDSVARIYPFWTPDIPLSSYVKGIYSFGLMETNFYDQAEKLAKEALSINPTDAWSVHTVAHIHEMKAEIKDGLEFMQHSETFWKDSDMLACHNYWHWALYLIEKGEYEAALTIYDTHILPSLQANDAMLDVVDSCSMLYRLQMEGVSVGQRWQDVLPVARKHSRDHILLFNDAHFLMASLGAHDPQTTQELLTTLRDASESPGENCQHLLARDVGLPLCQALVEAEDGNPDRVLELLLPIRYRIVQLGGSNAQRDVFNQLLIHAALNCTSSVHKNVARSLLMERDALKPNSPLTERLIRKAATVHLMQ.

Ala-2 carries the N-acetylalanine modification. Ser-5 carries the phosphoserine modification. 3 TPR repeats span residues Arg-108–Asp-141, Ser-180–Asp-213, and Cys-252–Ala-285.

It belongs to the TTC38 family.

In Homo sapiens (Human), this protein is Tetratricopeptide repeat protein 38 (TTC38).